The chain runs to 994 residues: UPF0182 protein Strop_3729 (994 aa).

A run of 7 helical transmembrane segments spans residues Ile18–Trp38, Leu61–Leu81, Ile110–Gln130, Phe174–Ile194, Ala209–Asp229, Ile260–Met280, and Leu283–Ile303. 2 disordered regions span residues Gly891–Ala934 and Phe970–Gly994. Residues Pro897–Leu926 are compositionally biased toward pro residues.

The protein belongs to the UPF0182 family.

Its subcellular location is the cell membrane. This Salinispora tropica (strain ATCC BAA-916 / DSM 44818 / JCM 13857 / NBRC 105044 / CNB-440) protein is UPF0182 protein Strop_3729.